The chain runs to 390 residues: Putative nickel insertion protein (390 aa).

Belongs to the LarC family.

The sequence is that of Putative nickel insertion protein from Geotalea daltonii (strain DSM 22248 / JCM 15807 / FRC-32) (Geobacter daltonii).